The chain runs to 233 residues: Glycerol-3-phosphate acyltransferase 5 (233 aa).

Transmembrane regions (helical) follow at residues 3–23 (LVFI…MAYL), 69–89 (MILL…VGLF), 116–136 (LVMA…FGLF), 143–163 (VFLG…FFGI), and 168–188 (TISW…LMAP).

Belongs to the PlsY family. Probably interacts with PlsX.

It is found in the cell membrane. The enzyme catalyses an acyl phosphate + sn-glycerol 3-phosphate = a 1-acyl-sn-glycero-3-phosphate + phosphate. It functions in the pathway lipid metabolism; phospholipid metabolism. Its function is as follows. Catalyzes the transfer of an acyl group from acyl-phosphate (acyl-PO(4)) to glycerol-3-phosphate (G3P) to form lysophosphatidic acid (LPA). This enzyme utilizes acyl-phosphate as fatty acyl donor, but not acyl-CoA or acyl-ACP. This chain is Glycerol-3-phosphate acyltransferase 5, found in Dehalococcoides mccartyi (strain ATCC BAA-2266 / KCTC 15142 / 195) (Dehalococcoides ethenogenes (strain 195)).